The primary structure comprises 356 residues: Nitric oxide synthase oxygenase (356 aa).

Cys63 lines the heme pocket.

It belongs to the NOS family. Bacterial NOS oxygenase subfamily. As to quaternary structure, homodimer. Forms a complex with trpS2; one homodimer of trpS2 binds one homodimer of nos. Requires heme as cofactor. The cofactor is (6S)-5,6,7,8-tetrahydrofolate.

The enzyme catalyses 3 reduced [flavodoxin] + 2 L-arginine + 4 O2 = 3 oxidized [flavodoxin] + 2 L-citrulline + 2 nitric oxide + 4 H2O + 5 H(+). With respect to regulation, nitric oxide synthase activity is increased by trpS2. Catalyzes the production of nitric oxide. The complex between TrpRS II and nitric oxide synthase oxygenase catalyzes the regioselective nitration of tryptophan at the 4-position. This is Nitric oxide synthase oxygenase (nos) from Deinococcus radiodurans (strain ATCC 13939 / DSM 20539 / JCM 16871 / CCUG 27074 / LMG 4051 / NBRC 15346 / NCIMB 9279 / VKM B-1422 / R1).